The following is a 328-amino-acid chain: Leucine carboxyl methyltransferase 1 (328 aa).

Residues arginine 81, glycine 105, aspartate 128, 175–177 (DLN), and glutamate 201 each bind S-adenosyl-L-methionine.

Belongs to the methyltransferase superfamily. LCMT family.

It carries out the reaction [phosphatase 2A protein]-C-terminal L-leucine + S-adenosyl-L-methionine = [phosphatase 2A protein]-C-terminal L-leucine methyl ester + S-adenosyl-L-homocysteine. Inhibited by S-adenosyl-L-homocysteine. Functionally, methylates the carboxyl group of the C-terminal leucine residue of protein phosphatase 2A catalytic subunits to form alpha-leucine ester residues. Acts on the two major protein phosphatase 2A catalytic subunits, PPH21 and PPH22. This is Leucine carboxyl methyltransferase 1 (PPM1) from Saccharomyces cerevisiae (strain ATCC 204508 / S288c) (Baker's yeast).